Here is a 257-residue protein sequence, read N- to C-terminus: 3-alpha-hydroxysteroid dehydrogenase/carbonyl reductase (257 aa).

NAD(+) contacts are provided by residues 8–13, D32, 41–42, and G71; these read GCATGI and DL. A substrate-binding site is contributed by S114. Y155 and K159 together coordinate NAD(+). Catalysis depends on Y155, which acts as the Proton acceptor.

Belongs to the short-chain dehydrogenases/reductases (SDR) family. Homodimer.

It is found in the cytoplasm. It carries out the reaction a 3alpha-hydroxysteroid + NADP(+) = a 3-oxosteroid + NADPH + H(+). The catalysed reaction is a 3alpha-hydroxysteroid + NAD(+) = a 3-oxosteroid + NADH + H(+). Its function is as follows. Catalyzes the reversible interconversion of hydroxy and oxo groups at position 3 of the steroid nucleus. Along with the 3 alpha-hydroxysteroid dehydrogenase and 3-oxo-reductase activities towards a variety of cis or trans fused A/B ring steroids, it also reduces several xenobiotic carbonyl compounds, including a metyrapone-based class of insecticides, to the respective alcohol metabolites. No detectable activity on testosterone, progesterone or 3-oxo-desogestrel. This Comamonas testosteroni (Pseudomonas testosteroni) protein is 3-alpha-hydroxysteroid dehydrogenase/carbonyl reductase (hsdA).